Consider the following 630-residue polypeptide: SHC-transforming protein 4 (630 aa).

Residues 1–185 (MRERGQDSLA…RQDRHFLQHL (185 aa)) are CH2. 2 disordered regions span residues 39 to 80 (TSLD…QESP) and 118 to 150 (KLQE…QQDL). The span at 125–142 (PGSSGPSSPETSLSRSGT) shows a compositional bias: low complexity. Positions 186-369 (LGMGMNYCVR…VHIDSHAEER (184 aa)) constitute a PID domain. Residues 370–525 (EDHEYYNEIP…HIKQQLWSEE (156 aa)) are CH1. At Tyr424 the chain carries Phosphotyrosine. Polar residues-rich tracts occupy residues 471-486 (LQST…SAQP) and 502-513 (PGATAQPASSHS). Residues 471-514 (LQSTPGSAGNQRSAQPLGSPWHCGKAPETVQPGATAQPASSHSL) form a disordered region. Residues 526–617 (CYHGKLSRKA…GSEVSLKQPV (92 aa)) form the SH2 domain.

Interacts (via PID domain) with phosphorylated MUSK (via NPXY motif); undergoes tyrosine phosphorylation downstream of activated MUSK. Interacts with GRB2; the interaction is dependent of Tyr-424 phosphorylation and increased by EGF. Phosphorylated; the phosphorylation is enhanced by EGF. Phosphorylation at Tyr-424 is required for the interaction with GRB2. As to expression, only expressed in melanomas. Weakly expressed in normal melanocytes and benign nevi. Highly expressed at the transition from radial growth phase to vertical growth phase and metastatic melanomas, when tumor cells acquire migratory competence and invasive potential.

The protein resides in the postsynaptic cell membrane. Functionally, activates both Ras-dependent and Ras-independent migratory pathways in melanomas. Contributes to the early phases of agrin-induced tyrosine phosphorylation of CHRNB1. The polypeptide is SHC-transforming protein 4 (SHC4) (Homo sapiens (Human)).